Here is a 304-residue protein sequence, read N- to C-terminus: ATP synthase gamma chain (304 aa).

This sequence belongs to the ATPase gamma chain family. In terms of assembly, F-type ATPases have 2 components, CF(1) - the catalytic core - and CF(0) - the membrane proton channel. CF(1) has five subunits: alpha(3), beta(3), gamma(1), delta(1), epsilon(1). CF(0) has three main subunits: a, b and c.

It is found in the cell membrane. Its function is as follows. Produces ATP from ADP in the presence of a proton gradient across the membrane. The gamma chain is believed to be important in regulating ATPase activity and the flow of protons through the CF(0) complex. This chain is ATP synthase gamma chain, found in Mycobacterium marinum (strain ATCC BAA-535 / M).